A 145-amino-acid polypeptide reads, in one-letter code: Ribosome-binding factor A (145 aa).

The segment covering 122–132 (KVQRDLESAPR) has biased composition (basic and acidic residues). Positions 122-145 (KVQRDLESAPREDDEGEPDSSSRD) are disordered.

This sequence belongs to the RbfA family. As to quaternary structure, monomer. Binds 30S ribosomal subunits, but not 50S ribosomal subunits or 70S ribosomes.

The protein resides in the cytoplasm. Functionally, one of several proteins that assist in the late maturation steps of the functional core of the 30S ribosomal subunit. Associates with free 30S ribosomal subunits (but not with 30S subunits that are part of 70S ribosomes or polysomes). Required for efficient processing of 16S rRNA. May interact with the 5'-terminal helix region of 16S rRNA. In Methylorubrum extorquens (strain PA1) (Methylobacterium extorquens), this protein is Ribosome-binding factor A.